The following is a 412-amino-acid chain: 46 kDa FK506-binding nuclear protein (412 aa).

Composition is skewed to acidic residues over residues 95-113 (EEDL…EEEA), 169-178 (GEDIDTDEND), and 188-216 (EGDD…EEEE). Residues 95–304 (EEDLEDEEEA…PVEKKEKKQI (210 aa)) are disordered. Residues 247-257 (KSQKRRLKKKL) are compositionally biased toward basic residues. Positions 271 to 303 (DKPKKEEPQQKAEKKKPEAKKEEAPVEKKEKKQ) are enriched in basic and acidic residues. In terms of domain architecture, PPIase FKBP-type spans 324-412 (GKVVMVYYEG…VFEVDLKNVK (89 aa)).

Belongs to the FKBP-type PPIase family. Post-translationally, phosphorylated by a nuclear kinase in the presence of Mg(2+) and ATP.

The protein resides in the nucleus. It carries out the reaction [protein]-peptidylproline (omega=180) = [protein]-peptidylproline (omega=0). Its activity is regulated as follows. Inhibited by both FK506 and rapamycin. PPIases accelerate the folding of proteins. It catalyzes the cis-trans isomerization of proline imidic peptide bonds in oligopeptides. Binds double-stranded DNA in vitro. In Spodoptera frugiperda (Fall armyworm), this protein is 46 kDa FK506-binding nuclear protein (FKBP46).